The primary structure comprises 308 residues: UDP-N-acetylenolpyruvoylglucosamine reductase (308 aa).

In terms of domain architecture, FAD-binding PCMH-type spans 22 to 185; that stretch reads RVGGPADWLF…VEAAFRADAG (164 aa). Residue Arg-165 is part of the active site. Residues 197 to 211 are compositionally biased toward basic and acidic residues; the sequence is QIARRDSSQPTRDRS. The disordered stretch occupies residues 197–228; that stretch reads QIARRDSSQPTRDRSAGSTFRNPAGFSSTGRA. The segment covering 212 to 226 has biased composition (polar residues); it reads AGSTFRNPAGFSSTG. Ser-214 serves as the catalytic Proton donor. Glu-296 is an active-site residue.

It belongs to the MurB family. FAD is required as a cofactor.

It localises to the cytoplasm. The enzyme catalyses UDP-N-acetyl-alpha-D-muramate + NADP(+) = UDP-N-acetyl-3-O-(1-carboxyvinyl)-alpha-D-glucosamine + NADPH + H(+). It functions in the pathway cell wall biogenesis; peptidoglycan biosynthesis. Cell wall formation. The sequence is that of UDP-N-acetylenolpyruvoylglucosamine reductase from Cereibacter sphaeroides (strain ATCC 17025 / ATH 2.4.3) (Rhodobacter sphaeroides).